The following is a 238-amino-acid chain: Glutamine amidotransferase-like protein chyE (238 aa).

The Glutamine amidotransferase type-1 domain maps to 8 to 238 (KIAVLINTPP…LERVLQWLSE (231 aa)). Residue Cys102 is the Nucleophile of the active site. Residues His189 and Glu191 contribute to the active site.

It belongs to the peptidase C26 family.

The protein operates within pigment biosynthesis. Functionally, glutamine amidotransferase-like protein; part of the gene cluster that mediates the biosynthesis of the yellow pigment chrysogine. the NRPS chyA mediates the condensation of anthranilic acid and alanine into the intermediate 2-(2-aminopropanamido)benzoic acid. The remainder of the pathway is highly branched yielding at least 13 chrysogine-related compounds. The malonyl transferase chyE converts 2-(2-aminopropanamido)benzoic acid and 2-(2-aminopropanamido)benzamidine into 2-(2-(2-carboxyacetamido)propanamido)benzoic acid and 3-((1-((2-carbamoylphenyl)amino)-1-oxopropan-2-yl)amino)-3-oxopropanoic acid, respectively. ChyD is an amidase, being responsible for the amidation of the carboxylic acid moiety of 2-(2-aminopropanamido)benzoic acid, 2-(2-(2-carboxyacetamido)propanamido)benzoic acid and 2-(2-((4-amino-1-carboxy-4-oxobutyl)amino)propanamido)benzoic acid. ChyC is involved in the same reactions as ChyD, but plays a more minor role in the amidation reactions compared to chyD. The oxidoreductases chyH and chyM are involved in oxidation reactions that form N-pyruvoylanthranilamide from 2-(2-aminopropanamido)benzamidine and (1-((2-carbamoylphenyl)amino)-1-oxopropan-2-yl)glutamine, respectively. N-pyruvoylanthranilamide is further converted via two further branches in the pathway, yielding chrysogine and additional chrysogine-related coumpounds. Chrysogine is likely formed by a spontaneous ring closure from N-pyruvoylanthranilamide. The polypeptide is Glutamine amidotransferase-like protein chyE (Penicillium rubens (strain ATCC 28089 / DSM 1075 / NRRL 1951 / Wisconsin 54-1255) (Penicillium chrysogenum)).